The following is a 97-amino-acid chain: YcgL domain-containing protein PMI1171 (97 aa).

Residues 3 to 87 (MICAIYRSTK…PVESMLNAYL (85 aa)) form the YcgL domain.

In Proteus mirabilis (strain HI4320), this protein is YcgL domain-containing protein PMI1171.